The chain runs to 52 residues: Lantibiotic gallidermin (52 aa).

The propeptide occupies 1–30 (MEAVKEKNELFDLDVKVNAKESNDSGAEPR). The lanthionine (Ser-Cys) cross-link spans 33 to 37 (SKFLC). Residues 38-41 (TPGC) constitute a cross-link (beta-methyllanthionine (Thr-Cys)). Position 44 is a (Z)-2,3-didehydrobutyrine (threonine 44). The lanthionine (Ser-Cys) cross-link spans 46–51 (SFNSYC). A cross-link (S-(2-aminovinyl)-D-cysteine (Ser-Cys)) is located at residues 49–52 (SYCC).

Belongs to the type A lantibiotic family. Maturation of lantibiotics involves the enzymatic conversion of Thr, and Ser into dehydrated AA and the formation of thioether bonds with cysteine. The C-terminal lanthionine undergoes decarboxylation. This is followed by membrane translocation and cleavage of the modified precursor. In terms of processing, the structure of the 2,3-didehydrobutyrine is not discussed in PubMed:1932575. However, in Fig. 5 the NMR model appears to have the Z-isomer.

Functionally, lanthionine-containing peptide antibiotic (lantibiotic) active on Gram-positive bacteria. The bactericidal activity of lantibiotics is based on depolarization of energized bacterial cytoplasmic membranes, initiated by the formation of aqueous transmembrane pores. The protein is Lantibiotic gallidermin (gdmA) of Staphylococcus gallinarum.